Consider the following 442-residue polypeptide: Glutamate--methylamine ligase (442 aa).

The GS beta-grasp domain occupies 13–97; it reads NQVKYILAQF…IACDGHTHGK (85 aa). Residues 103 to 442 form the GS catalytic domain; the sequence is TRVVLKKQLE…WEVNSYLEFF (340 aa).

This sequence belongs to the glutamine synthetase family. Type 3 subfamily. It depends on Mg(2+) as a cofactor.

It carries out the reaction methylamine + L-glutamate + ATP = N(5)-methyl-L-glutamine + ADP + phosphate + H(+). Functionally, catalyzes the formation of N(5)-methyl-L-glutamine from glutamate and methylamine. The sequence is that of Glutamate--methylamine ligase from Methyloversatilis universalis (strain ATCC BAA-1314 / DSM 25237 / JCM 13912 / CCUG 52030 / FAM5).